The chain runs to 586 residues: MGVNAVHWFRKGLRLHDNPALKECIQGADTIRCVYILDPWFAGSSNVGINRWRFLLQCLEDLDANLRKLNSRLFVIRGQPADVFPRLFKEWNITKLSIEYDSEPFGKERDAAIKKLATEAGVEVIVRISHTLYDLDKIIELNGGQPPLTYKRFQTLISKMEPLEIPVETITSEVIEKCTTPLSDDHDEKYGVPSLEELGFDTDGLSSAVWPGGETEALTRLERHLERKAWVANFERPRMNANSLLASPTGLSPYLRFGCLSCRLFYFKLTDLYKKVKRNSSPPLSLYGQLLWREFFYTAATNNPRFDKMEGNPICVQIPWDKNPEALAKWAEGRTGFPWIDAIMTQLRQEGWIHHLARHAVACFLTRGDLWISWEEGMKVFEELLLDADWSINAGSWMWLSCSSFFQQFFHCYCPVGFGRRTDPNGDYIRRYLPVLRGFPAKYIYDPWNAPEGIQKVAKCLIGINYPKPMVNHAEASRLNIERMKQIYQQLSRYRGLGLLASVPSNPNGNGGFMGYSTENIPGCSSSGSCSQGSGILHYTHGDSQQTHLLKQGRSSMGTGLSGGKRPSQEEDTQSIGPKVQRQSTN.

The Photolyase/cryptochrome alpha/beta domain maps to 3-132; it reads VNAVHWFRKG…EVIVRISHTL (130 aa). Lysine 11 participates in a covalent cross-link: Glycyl lysine isopeptide (Lys-Gly) (interchain with G-Cter in ubiquitin). The short motif at 50-54 is the LIR 1 element; the sequence is NRWRF. Phosphoserine; by AMPK is present on serine 71. The LIR 2 signature appears at 82–87; sequence DVFPRL. Lysine 107 is covalently cross-linked (Glycyl lysine isopeptide (Lys-Gly) (interchain with G-Cter in ubiquitin)). An LIR 3 motif is present at residues 151-156; that stretch reads KRFQTL. Lysine 159 is covalently cross-linked (Glycyl lysine isopeptide (Lys-Gly) (interchain with G-Cter in ubiquitin)). Serine 247 bears the Phosphoserine; by MAPK mark. Serine 252 lines the FAD pocket. Short sequence motifs (LIR) lie at residues 255–260 and 271–276; these read LRFGCL and DLYKKV. Serine 280 carries the phosphoserine; by AMPK modification. The short motif at 285 to 290 is the LIR 6 element; the sequence is SLYGQL. Residue glutamine 289 participates in FAD binding. Lysine 329 is covalently cross-linked (Glycyl lysine isopeptide (Lys-Gly) (interchain with G-Cter in ubiquitin)). An LIR 7 motif is present at residues 335-339; the sequence is TGFPW. Histidine 355 contacts FAD. Residues 371-470 are required for inhibition of CLOCK-BMAL1-mediated transcription; the sequence is WISWEEGMKV…LIGINYPKPM (100 aa). The short motif at 379–384 is the LIR 8 element; sequence KVFEEL. FAD is bound at residue 387-389; sequence DAD. Short sequence motifs (LIR) lie at residues 395–400, 411–416, and 430–435; these read GSWMWL, HCYCPV, and RRYLPV. The segment at 471–493 is interaction with TIMELESS; the sequence is VNHAEASRLNIERMKQIYQQLSR. Lysine 485 participates in a covalent cross-link: Glycyl lysine isopeptide (Lys-Gly) (interchain with G-Cter in ubiquitin). Short sequence motifs (LIR) lie at residues 486 to 491 and 492 to 497; these read QIYQQL and SRYRGL. A compositionally biased stretch (polar residues) spans 545–559; the sequence is QQTHLLKQGRSSMGT. The interval 545-586 is disordered; sequence QQTHLLKQGRSSMGTGLSGGKRPSQEEDTQSIGPKVQRQSTN. Lysine 565 participates in a covalent cross-link: Glycyl lysine isopeptide (Lys-Gly) (interchain with G-Cter in ubiquitin). Position 568 is a phosphoserine (serine 568).

Belongs to the DNA photolyase class-1 family. As to quaternary structure, component of the circadian core oscillator, which includes the CRY proteins, CLOCK or NPAS2, BMAL1 or BMAL2, CSNK1D and/or CSNK1E, TIMELESS, and the PER proteins. Interacts directly with TIMELESS. Interacts directly with PER1, PER2 and PER3; interaction with PER2 inhibits its ubiquitination and vice versa. Interacts with FBXL21. Interacts with FBXL3. Interacts with CLOCK-BMAL1 independently of PER2 and DNA. Interacts with HDAC1, HDAC2 and SIN3B. Interacts with nuclear receptors AR, NR1D1, NR3C1/GR, RORA and RORC; the interaction with at least NR3C1/GR is ligand dependent. Interacts with PRKDC. Interacts with the G protein subunit alpha GNAS; the interaction may block GPCR-mediated regulation of cAMP concentrations. Interacts with PRMT5. Interacts with EZH2. Interacts with MYBBP1A, DOCK7, HNRNPU, RPL7A, RPL8 and RPS3. Interacts with PPP5C (via TPR repeats). Interacts with MAP1LC3B. Interacts with CLOCK. Interacts with BMAL1. Interacts weakly with HDAC3; this interaction is enhanced in the presence of FBXL3. Interacts with TRIM28, KCTD5 and DDB1. Interacts with FOXO1. Interacts with DTL and DDB1-CUL4A complex. Interacts with HNF4A. Interacts with PSMD2 in a KDM8-dependent manner. Interacts with KDM8 in a FBXL3-dependent manner. Interacts with PPARG in a ligand-dependent manner. Interacts with PPARD (via domain NR LBD) and NR1I2 (via domain NR LBD) in a ligand-dependent manner. Interacts with PPARA, NR1I3 and VDR. FAD is required as a cofactor. (6R)-5,10-methylene-5,6,7,8-tetrahydrofolate serves as cofactor. Phosphorylation on Ser-247 by MAPK is important for the inhibition of CLOCK-BMAL1-mediated transcriptional activity. Phosphorylation by CSNK1E requires interaction with PER1 or PER2. Phosphorylation at Ser-71 and Ser-280 by AMPK decreases protein stability. Phosphorylation at Ser-568 exhibits a robust circadian rhythm with a peak at CT8, increases protein stability, prevents SCF(FBXL3)-mediated degradation and is antagonized by interaction with PRKDC. Post-translationally, ubiquitinated by the SCF(FBXL3) and SCF(FBXL21) complexes, regulating the balance between degradation and stabilization. The SCF(FBXL3) complex is mainly nuclear and mediates ubiquitination and subsequent degradation of CRY1. In contrast, cytoplasmic SCF(FBXL21) complex-mediated ubiquitination leads to stabilize CRY1 and counteract the activity of the SCF(FBXL3) complex. The SCF(FBXL3) and SCF(FBXL21) complexes probably mediate ubiquitination at different Lys residues. Ubiquitination at Lys-11 and Lys-107 are specifically ubiquitinated by the SCF(FBXL21) complex but not by the SCF(FBXL3) complex. Ubiquitination may be inhibited by PER2. Deubiquitinated by USP7. In terms of processing, undergoes autophagy-mediated degradation in the liver in a time-dependent manner. Autophagic degradation of CRY1 (an inhibitor of gluconeogenesis) occurs during periods of reduced feeding allowing induction of gluconeogenesis and maintenance of blood glucose levels.

The protein resides in the cytoplasm. Its subcellular location is the nucleus. Its function is as follows. Transcriptional repressor which forms a core component of the circadian clock. The circadian clock, an internal time-keeping system, regulates various physiological processes through the generation of approximately 24 hour circadian rhythms in gene expression, which are translated into rhythms in metabolism and behavior. It is derived from the Latin roots 'circa' (about) and 'diem' (day) and acts as an important regulator of a wide array of physiological functions including metabolism, sleep, body temperature, blood pressure, endocrine, immune, cardiovascular, and renal function. Consists of two major components: the central clock, residing in the suprachiasmatic nucleus (SCN) of the brain, and the peripheral clocks that are present in nearly every tissue and organ system. Both the central and peripheral clocks can be reset by environmental cues, also known as Zeitgebers (German for 'timegivers'). The predominant Zeitgeber for the central clock is light, which is sensed by retina and signals directly to the SCN. The central clock entrains the peripheral clocks through neuronal and hormonal signals, body temperature and feeding-related cues, aligning all clocks with the external light/dark cycle. Circadian rhythms allow an organism to achieve temporal homeostasis with its environment at the molecular level by regulating gene expression to create a peak of protein expression once every 24 hours to control when a particular physiological process is most active with respect to the solar day. Transcription and translation of core clock components (CLOCK, NPAS2, BMAL1, BMAL2, PER1, PER2, PER3, CRY1 and CRY2) plays a critical role in rhythm generation, whereas delays imposed by post-translational modifications (PTMs) are important for determining the period (tau) of the rhythms (tau refers to the period of a rhythm and is the length, in time, of one complete cycle). A diurnal rhythm is synchronized with the day/night cycle, while the ultradian and infradian rhythms have a period shorter and longer than 24 hours, respectively. Disruptions in the circadian rhythms contribute to the pathology of cardiovascular diseases, cancer, metabolic syndromes and aging. A transcription/translation feedback loop (TTFL) forms the core of the molecular circadian clock mechanism. Transcription factors, CLOCK or NPAS2 and BMAL1 or BMAL2, form the positive limb of the feedback loop, act in the form of a heterodimer and activate the transcription of core clock genes and clock-controlled genes (involved in key metabolic processes), harboring E-box elements (5'-CACGTG-3') within their promoters. The core clock genes: PER1/2/3 and CRY1/2 which are transcriptional repressors form the negative limb of the feedback loop and interact with the CLOCK|NPAS2-BMAL1|BMAL2 heterodimer inhibiting its activity and thereby negatively regulating their own expression. This heterodimer also activates nuclear receptors NR1D1/2 and RORA/B/G, which form a second feedback loop and which activate and repress BMAL1 transcription, respectively. CRY1 and CRY2 have redundant functions but also differential and selective contributions at least in defining the pace of the SCN circadian clock and its circadian transcriptional outputs. More potent transcriptional repressor in cerebellum and liver than CRY2, though more effective in lengthening the period of the SCN oscillator. On its side, CRY2 seems to play a critical role in tuning SCN circadian period by opposing the action of CRY1. With CRY2, is dispensable for circadian rhythm generation but necessary for the development of intercellular networks for rhythm synchrony. Capable of translocating circadian clock core proteins such as PER proteins to the nucleus. Interacts with CLOCK-BMAL1 independently of PER proteins and is found at CLOCK-BMAL1-bound sites, suggesting that CRY may act as a molecular gatekeeper to maintainCLOCK-BMAL1 in a poised and repressed state until the proper time for transcriptional activation. Represses the CLOCK-BMAL1 induced transcription of BHLHE40/DEC1, ATF4, MTA1, KLF10 and NAMPT. May repress circadian target genes expression in collaboration with HDAC1 and HDAC2 through histone deacetylation. Mediates the clock-control activation of ATR and modulates ATR-mediated DNA damage checkpoint. In liver, mediates circadian regulation of cAMP signaling and gluconeogenesis by binding to membrane-coupled G proteins and blocking glucagon-mediated increases in intracellular cAMP concentrations and CREB1 phosphorylation. Inhibits hepatic gluconeogenesis by decreasing nuclear FOXO1 levels that down-regulates gluconeogenic gene expression. Besides its role in the maintenance of the circadian clock, is also involved in the regulation of other processes. Represses glucocorticoid receptor NR3C1/GR-induced transcriptional activity by binding to glucocorticoid response elements (GREs). Plays a key role in glucose and lipid metabolism modulation, in part, through the transcriptional regulation of genes involved in these pathways, such as LEP or ACSL4. Represses PPARD and its target genes in the skeletal muscle and limits exercise capacity. Plays an essential role in the generation of circadian rhythms in the retina. Represses the transcriptional activity of NR1I2. This chain is Cryptochrome-1 (CRY1), found in Macaca fascicularis (Crab-eating macaque).